A 534-amino-acid polypeptide reads, in one-letter code: Arginine--tRNA ligase (534 aa).

The 'HIGH' region motif lies at 120–130 (ANPTGFLHLGH).

Belongs to the class-I aminoacyl-tRNA synthetase family. Monomer.

The protein resides in the cytoplasm. The catalysed reaction is tRNA(Arg) + L-arginine + ATP = L-arginyl-tRNA(Arg) + AMP + diphosphate. In Mesomycoplasma hyopneumoniae (strain 232) (Mycoplasma hyopneumoniae), this protein is Arginine--tRNA ligase.